A 1390-amino-acid polypeptide reads, in one-letter code: MPSMLGSMMVASTSAPSLQEALENAGRLIDRQLQEDRMYPDLSELLMVSAPNSPTVSGMSDMDYPLQGPGLLSVPSLPEISTIRRVPLRLSWLNSLDTCSVTAMMGVFPPISRAWLTIDSDIFMWNYEDGGDLAYFDGLSETILAVGLVKPKAGIFQPHVRHLLVLATPVDIVILGLSYANVQTGSGILNDSVCGGLQLLPDPLYSLPTDNTYLLTITSTDNGRIFLAGKDGCLYEVAYQAEAGWFSQRCRKINHSKSSLSFLVPSLLQFTFSEDDPIVQIEIDNSRNILYTRSEKGVIQVYDLGHDGQGMSRVASVSQNAIVCAAGNIARTIDRSVFKPIVQIAVIENSESLDCQLLAVTHAGVRLYFSTCPFRQPLARPNTLTLVHVRLPPGFSASSTVEKPSKVHKALYSKGILLMTASENEDNDILWCVNHDTFPFQKPMMETQMTTRVDGHSWALSAIDELKVDKIITPLNKDHIPITDSPVVVQQHMLPPKKFVLLSAQGSLMFHKLRPVDQLRHLLVSNVGGDGEEIERFFKLHQEDQACATCLILACSTAACDREVSAWATRAFFRYGGEAQMRFPATLPTPSNVGPILGSPMYSSSPVPTGSPYPNPSSLGTPSHGAQPPTMSTPMSAVGNPAMQAASLSGLTGPEIVYSGKHNGICIYFSRIMGNIWDASLVVERVFKSSNREITAIESSVPIQLLESVLQELKGLQEFLDRNSQFSGGPLGNPNTTAKVQQRLLGVMRPENGNTQQMQQELQRKFHEAQLSEKISLQAIQQLVRKSYQALALWKLLCEHQFTVIVGELQKEFQEQLKITTFKDLVIREKEVTGALIASLINCYIRDNAAVDGISLHLQDTCPLLYSTDDAVCSKANELLQRSRQVQSKSERERMLRESLKEYQKISNQVDLPSVCAQYRQVRFYEGVVELSLTAAEKKDPQGLGLHFYKHGEPEEDVVGLQTFQERLNSYKCITDTLQELVNQSKAAPQSPSVPKKPGPPVLSSDPNMLSNEEAGHHFEQMLKLAQRSKDELFSIALYNWLIQADLADKLLQIASPFLEPHLVRMAKVDQNRVRYMDLLWRYYEKNRSFSSAARVLSKLADMHSTEISLQQRLEYIARAILSAKSSTAISSIAADGEFLHELEEKMEVARIQLQIQETLQRQYSHHSSVQDAISQLDSELMDITKLYGEFADPFKLAECKLAIIHCAGYSDPILVHTLWQDIIEKELSDSVTLSSSDRMHALSLKLVLLGKIYAGTPRFFPLDFIVQFLEQQVCTLNWDVGFVIQTMNEIGVPLPRLLEVYDQLFKSRDPFWNRVKSPLHLLDCIHVLLTRYVENPSLVLNCERRRFTNLCLDAVCGYLVELQSMSSSVAVQAITGNFKSLQAKLERLH.

O-linked (GlcNAc) serine glycosylation occurs at S525. A disordered region spans residues 598–632 (GSPMYSSSPVPTGSPYPNPSSLGTPSHGAQPPTMS). K739 participates in a covalent cross-link: Glycyl lysine isopeptide (Lys-Gly) (interchain with G-Cter in SUMO2). The disordered stretch occupies residues 984-1011 (QSKAAPQSPSVPKKPGPPVLSSDPNMLS). S1056 bears the Phosphoserine mark.

Belongs to the non-repetitive/WGA-negative nucleoporin family. In terms of assembly, interacts with GLE1. Able to form a heterotrimer with GLE1 and NUP42 in vitro. Forms a complex with NUP35, NUP93, NUP205 and lamin B. Phosphorylated. Phosphorylation and dephosphorylation may be important for the function of NUP155 and may play a role in the reversible disassembly of the nuclear pore complex during mitosis. In terms of processing, disulfide-linked to NUP62. The inner channel of the NPC has a different redox environment from the cytoplasm and allows the formation of interchain disulfide bonds between some nucleoporins, the significant increase of these linkages upon oxidative stress reduces the permeability of the NPC.

It localises to the nucleus. The protein localises to the nuclear pore complex. Its subcellular location is the nucleus membrane. Essential component of nuclear pore complex. Could be essessential for embryogenesis. Nucleoporins may be involved both in binding and translocating proteins during nucleocytoplasmic transport. The protein is Nuclear pore complex protein Nup155 (Nup155) of Rattus norvegicus (Rat).